The primary structure comprises 298 residues: MALDKDIVGSIEFLEVVGLQGSTYLLKGPNGESVKLNQSEVAEEDDFELGEEYSFFVYPNRSGDLFATQNMPDITKDKYDFAKVIKTDRDGAHIDVGLPREVLVPWEDLPKLKELWPKAGDYLLVTLRIDSTNQMFGRLASETIVESMFTPVNDDSKQNEYISARAYRLLRVGSFLLSNEGYKIFVHESERKHEPRLGEAVEVRIIGHNEKGELNGSFLPLAHERLDDDGQVIFDLLVEYDGELPFWDKSSPDAIKEVFNMSKGSFKRAIGHLYKKKIINIETGKITLTKKGWSRVDD.

It belongs to the CvfB family.

The polypeptide is Conserved virulence factor B (cvfB) (Staphylococcus epidermidis (strain ATCC 12228 / FDA PCI 1200)).